The following is a 948-amino-acid chain: UvrABC system protein A (948 aa).

Residue 42-49 (GLSGSGKS) coordinates ATP. A C4-type zinc finger spans residues 262-289 (CPVCSYSLPELEPRLFSFNNPMGSCPTC). 2 consecutive ABC transporter domains span residues 319–596 (WDKR…ENSV) and 616–945 (VNPG…KYLK). 649–656 (GVSGSGKS) lines the ATP pocket. The C4-type zinc finger occupies 748–774 (CEACQGDGVIKVEMHFLPDVYVPCEVC).

This sequence belongs to the ABC transporter superfamily. UvrA family. In terms of assembly, forms a heterotetramer with UvrB during the search for lesions.

It localises to the cytoplasm. Functionally, the UvrABC repair system catalyzes the recognition and processing of DNA lesions. UvrA is an ATPase and a DNA-binding protein. A damage recognition complex composed of 2 UvrA and 2 UvrB subunits scans DNA for abnormalities. When the presence of a lesion has been verified by UvrB, the UvrA molecules dissociate. The sequence is that of UvrABC system protein A from Neisseria meningitidis serogroup A / serotype 4A (strain DSM 15465 / Z2491).